The chain runs to 332 residues: DNA-directed RNA polymerase subunit alpha (332 aa).

Residues 1–234 (MTVTVSQVLR…DQLSVFGDFT (234 aa)) are alpha N-terminal domain (alpha-NTD). The tract at residues 248–332 (VDPVLLRPID…PGVSQYGMLG (85 aa)) is alpha C-terminal domain (alpha-CTD).

It belongs to the RNA polymerase alpha chain family. Homodimer. The RNAP catalytic core consists of 2 alpha, 1 beta, 1 beta' and 1 omega subunit. When a sigma factor is associated with the core the holoenzyme is formed, which can initiate transcription.

The catalysed reaction is RNA(n) + a ribonucleoside 5'-triphosphate = RNA(n+1) + diphosphate. Functionally, DNA-dependent RNA polymerase catalyzes the transcription of DNA into RNA using the four ribonucleoside triphosphates as substrates. The sequence is that of DNA-directed RNA polymerase subunit alpha from Xylella fastidiosa (strain M23).